A 413-amino-acid polypeptide reads, in one-letter code: Multifunctional CCA protein (413 aa).

2 residues coordinate ATP: Gly-8 and Arg-11. The CTP site is built by Gly-8 and Arg-11. The Mg(2+) site is built by Asp-21 and Asp-23. Positions 91, 137, and 140 each coordinate ATP. Arg-91, Arg-137, and Arg-140 together coordinate CTP. The region spanning 228 to 329 is the HD domain; that stretch reads TGIHTLMVLA…IKIFDKADLW (102 aa).

This sequence belongs to the tRNA nucleotidyltransferase/poly(A) polymerase family. Bacterial CCA-adding enzyme type 1 subfamily. In terms of assembly, monomer. Can also form homodimers and oligomers. Mg(2+) is required as a cofactor. The cofactor is Ni(2+).

The catalysed reaction is a tRNA precursor + 2 CTP + ATP = a tRNA with a 3' CCA end + 3 diphosphate. It carries out the reaction a tRNA with a 3' CCA end + 2 CTP + ATP = a tRNA with a 3' CCACCA end + 3 diphosphate. Catalyzes the addition and repair of the essential 3'-terminal CCA sequence in tRNAs without using a nucleic acid template. Adds these three nucleotides in the order of C, C, and A to the tRNA nucleotide-73, using CTP and ATP as substrates and producing inorganic pyrophosphate. tRNA 3'-terminal CCA addition is required both for tRNA processing and repair. Also involved in tRNA surveillance by mediating tandem CCA addition to generate a CCACCA at the 3' terminus of unstable tRNAs. While stable tRNAs receive only 3'-terminal CCA, unstable tRNAs are marked with CCACCA and rapidly degraded. This Shewanella woodyi (strain ATCC 51908 / MS32) protein is Multifunctional CCA protein.